The primary structure comprises 398 residues: MTQSVCILGVTGSIGRSTLKILGQHPDKYSVFAVSAHSRISELVEICKQFRPKVVVVPEQKIAELKTLFAQQNISDIDVLAGQEGLVDIASHTDVDIVMAAIVGAAGLLPTLAAVKAGKRVLLANKEALVMSGEIMMQAARDHQALLLPVDSEHNAIFQSLPHNYLQADRTGQPQLGVSKILLTASGGPFLNHSLEQLVHVTPQQACKHPNWSMGQKISVDSATLMNKGLELIEACHLFSISEHFVTVVVHPQSIIHSMVQYVDGSTLAQMGNPDMCTPIAHALAWPERLQTNVPALDLFEYSQLNFQAPDTQKFPALNLARQAMRAGGLAPTILNAANEIAVEAFLMERIGFTSIPQVVEHTLEKLENAAAESIECILDKDKVARSVAQQYISSIGG.

Residues T11, G12, S13, I14, and N125 each coordinate NADPH. K126 lines the 1-deoxy-D-xylulose 5-phosphate pocket. E127 lines the NADPH pocket. D151 serves as a coordination point for Mn(2+). S152, E153, S186, and H209 together coordinate 1-deoxy-D-xylulose 5-phosphate. Mn(2+) is bound at residue E153. G215 serves as a coordination point for NADPH. Residues S222, N227, K228, and E231 each contribute to the 1-deoxy-D-xylulose 5-phosphate site. Residue E231 coordinates Mn(2+).

It belongs to the DXR family. It depends on Mg(2+) as a cofactor. Requires Mn(2+) as cofactor.

It carries out the reaction 2-C-methyl-D-erythritol 4-phosphate + NADP(+) = 1-deoxy-D-xylulose 5-phosphate + NADPH + H(+). Its pathway is isoprenoid biosynthesis; isopentenyl diphosphate biosynthesis via DXP pathway; isopentenyl diphosphate from 1-deoxy-D-xylulose 5-phosphate: step 1/6. In terms of biological role, catalyzes the NADPH-dependent rearrangement and reduction of 1-deoxy-D-xylulose-5-phosphate (DXP) to 2-C-methyl-D-erythritol 4-phosphate (MEP). The polypeptide is 1-deoxy-D-xylulose 5-phosphate reductoisomerase (Acinetobacter baumannii (strain AB307-0294)).